A 421-amino-acid chain; its full sequence is Gamma-glutamyl phosphate reductase (421 aa).

Belongs to the gamma-glutamyl phosphate reductase family.

The protein localises to the cytoplasm. The enzyme catalyses L-glutamate 5-semialdehyde + phosphate + NADP(+) = L-glutamyl 5-phosphate + NADPH + H(+). It participates in amino-acid biosynthesis; L-proline biosynthesis; L-glutamate 5-semialdehyde from L-glutamate: step 2/2. Catalyzes the NADPH-dependent reduction of L-glutamate 5-phosphate into L-glutamate 5-semialdehyde and phosphate. The product spontaneously undergoes cyclization to form 1-pyrroline-5-carboxylate. The protein is Gamma-glutamyl phosphate reductase of Acinetobacter baumannii (strain ACICU).